Consider the following 229-residue polypeptide: Large ribosomal subunit protein uL1 (229 aa).

Belongs to the universal ribosomal protein uL1 family. In terms of assembly, part of the 50S ribosomal subunit.

In terms of biological role, binds directly to 23S rRNA. The L1 stalk is quite mobile in the ribosome, and is involved in E site tRNA release. Protein L1 is also a translational repressor protein, it controls the translation of the L11 operon by binding to its mRNA. This Haemophilus influenzae (strain 86-028NP) protein is Large ribosomal subunit protein uL1.